A 424-amino-acid polypeptide reads, in one-letter code: Serpin-Z2A (424 aa).

The RCL stretch occupies residues 370-394; the sequence is GTEAAASTACTIRLLSMSYPEDFVA.

Belongs to the serpin family.

Probable serine protease inhibitor. This is Serpin-Z2A from Oryza sativa subsp. japonica (Rice).